Consider the following 1396-residue polypeptide: MASKAKNTAAAAKAEGTAKRRIRKIFGDIHEVVKMPNLIEVQRESYEQFLRSNKEIDYVSGLEKTLRSVFPIRDFAGTAELDFVHYELEPPKYDTTECRQRGITYAAPMKVTLRLIVFEVDQETETRSVLDIKEQDVYMGDMPLMTGNGTFIINGTERVIVSQMHRSPGVLFDHDRGKTHSSGKLLFAARVIPYRGSWLDFEFDAKDIVNVRIDRKRKLPVTALLYALGLDSEEILHFFYNTVTWKRAGGKKGEGWKIPFEPEAWRGQKPTFALVDAKTGEEVFPANQKISPRAANKAQKDGLKDLLLPTEEVFARYAAKDMIDEKTGRIYIEAGDEVGPDHLEALDAAGIDELELLDIDEINTGPWIRNTLKVDKAENRDEGLEAIYKVMRPGEPPTKETAEALFEGLFFDGERYDLSAVGRVKLNMRLDLDAEDTVTTLRKEDILAVVKELVGLKDGKGDVDDIDNLGNRRVRSVGELLENQYRVGLLRMERAVKERMSSVDVSTVMPNDLINAKPAVAAVREFFGSSQLSQFMDQTNPLSEVTHKRRVSALGPGGLTRERAGFEVRDVHPTHYGRICPIETPEGPNIGLINSLSTFARVNKYGFIETPYRVVKDGKVTSEVIYLSAMEEQKHTVAQASAELTEDGTFVEELISARQNGDNLMAPSETVTLMDVSPKQLVSVAASLIPFLENDDANRALMGSNMQRQAVPLVKAEAPWVGTGMEETVARDSGAAITATRGGIVDQVDATRIVIRAIGDVEPGQSGVDIYTLQKFQRSNQNTCINQRPLVKVGETVEAGDVIADGPSTDLGELALGKNTLVAFMPWNGYNYEDSILISERIVKDDVFTSIHIEEFEVMARDTKLGPEDITRDIPNVGEEALRNLDEAGIVYIGAEVHPGDILCGKITPKGESPMTPEEKLLRAIFGEKASDVRDTSLRLPPGVAGTVVEVRVFNRHGIEVDDRTRAIQQEEIERLRKDSQDERTILNRATYNRLRDMLLGQTASAAPKGVKKGVKIDEALLEGIDRHEWFKFAVADDNRQQQIEAVKSQYDEAAKGIDDKFEDRKEKLERGDELAPGVLKMVKVFVAVKRKLQPGDKMAGRHGNKGVISRILPVEDMPFLEDGTPVDIVLNPLGVPSRMNVGQIFETHLGFAARGLGQQVKNALEDWRAANPDPEAGKPPEAVKETLQRVYGDRYEDDIAGRSNAEIIELASNLTAGVPMGTPVFDGAREGDVTTQLEAAGIDSSGQSVLYDGRTGEAFDRKVTVGIIYMLKLHHLVDDKIHARSIGPYSLVTQQPLGGKAQFGGQRFGEMEVWALQAYGAAYTLQEMLTVKSDDVVGRTKVYEAIVKGDDTFEAGIPESFNVLVKEMRSLGLNVELSSLTDGDEDDDGLQIAAE.

The protein belongs to the RNA polymerase beta chain family. As to quaternary structure, the RNAP catalytic core consists of 2 alpha, 1 beta, 1 beta' and 1 omega subunit. When a sigma factor is associated with the core the holoenzyme is formed, which can initiate transcription.

It catalyses the reaction RNA(n) + a ribonucleoside 5'-triphosphate = RNA(n+1) + diphosphate. DNA-dependent RNA polymerase catalyzes the transcription of DNA into RNA using the four ribonucleoside triphosphates as substrates. The polypeptide is DNA-directed RNA polymerase subunit beta (Erythrobacter litoralis (strain HTCC2594)).